Consider the following 138-residue polypeptide: MRTLWIVAVCLIGVEGSLLEFGMMILEETGKNPLTSYSFYGCYCGVGGKGTPKDATDRCCFVHDCCYGNLPDCNPKIDRYKYHRKNGAIVCGKGTSCENRICECDRAAAICFRKNLKTYNHIYKYYPDFLCKKESEKC.

A signal peptide spans 1 to 16; it reads MRTLWIVAVCLIGVEG. 7 disulfide bridges follow: C42–C131, C44–C60, C59–C111, C65–C138, C66–C104, C73–C97, and C91–C102. 3 residues coordinate Ca(2+): Y43, G45, and G47. H63 is a catalytic residue. A Ca(2+)-binding site is contributed by D64. Residue D105 is part of the active site.

The cofactor is Ca(2+). Expressed by the venom gland.

It localises to the secreted. The enzyme catalyses a 1,2-diacyl-sn-glycero-3-phosphocholine + H2O = a 1-acyl-sn-glycero-3-phosphocholine + a fatty acid + H(+). Its function is as follows. Snake venom phospholipase A2 that may have a strong anticoagulant activity. Is able to suppress the acetylcholine (ACh)-evoked current mediated by alpha-7 (CHRNA7)-similar nAChRs in L.stagnalis neurons (IC(50)=10.5 uM) and to compete with alpha-bungarotoxin for binding to muscle- and alpha-7 neuronal nAChR types, as well as to AChBPs. In inhibition of alpha-bungarotoxin binding, this toxin is mostly active against T.californica nAChR (IC(50)=0.26 uM), it is moderately active against human alpha-7 nAChR (IC(50)=14 uM), and is not active against L.stagnalis and A.californica AChBP (IC(50)&gt;30 uM). In Vipera renardi (Steppe viper), this protein is Basic phospholipase A2 vurtoxin.